Reading from the N-terminus, the 208-residue chain is MRGKFISFEGIDGCGKTTQVKLLEEHLKKEGYDLLVLREPGGTRVGEKVREILLDRENLIFPVTEMLLYASSRAQLVEEKILPALSKGQMVIVDRFIDSSYVYQGYARGLGLEKVKIVNEIATKGLFPDITVYIDITPEEAIKRRQGKKADRLEGEDYEFHKKVREGYLRLVKDFPERFILIDGMQEVLAVHKMVVKAVEEYLKGAKV.

10 to 17 (GIDGCGKT) provides a ligand contact to ATP.

The protein belongs to the thymidylate kinase family.

It carries out the reaction dTMP + ATP = dTDP + ADP. Phosphorylation of dTMP to form dTDP in both de novo and salvage pathways of dTTP synthesis. This Caldanaerobacter subterraneus subsp. tengcongensis (strain DSM 15242 / JCM 11007 / NBRC 100824 / MB4) (Thermoanaerobacter tengcongensis) protein is Thymidylate kinase.